A 392-amino-acid chain; its full sequence is uncharacterized protein (392 aa).

This is an uncharacterized protein from Encephalitozoon cuniculi (strain GB-M1) (Microsporidian parasite).